The following is a 284-amino-acid chain: HTH-type transcriptional activator RhaR (284 aa).

Positions 181–279 (DMLMNALRAS…GVSPSAYRQR (99 aa)) constitute an HTH araC/xylS-type domain. 2 DNA-binding regions (H-T-H motif) span residues 198 to 219 (EAFCEQHHFSARSLRSRFKEQT) and 246 to 269 (IGDIAALCGFEDSNYFSVVFHQAF).

In terms of assembly, binds DNA as a dimer.

It localises to the cytoplasm. In terms of biological role, activates expression of the rhaSR operon in response to L-rhamnose. The protein is HTH-type transcriptional activator RhaR of Pectobacterium carotovorum subsp. carotovorum (strain PC1).